The chain runs to 295 residues: Urease accessory protein UreD (295 aa).

Belongs to the UreD family. UreD, UreF and UreG form a complex that acts as a GTP-hydrolysis-dependent molecular chaperone, activating the urease apoprotein by helping to assemble the nickel containing metallocenter of UreC. The UreE protein probably delivers the nickel.

Its subcellular location is the cytoplasm. Functionally, required for maturation of urease via the functional incorporation of the urease nickel metallocenter. This is Urease accessory protein UreD from Saccharophagus degradans (strain 2-40 / ATCC 43961 / DSM 17024).